A 264-amino-acid polypeptide reads, in one-letter code: Type III pantothenate kinase (264 aa).

An ATP-binding site is contributed by 6–13 (DVRNTSIE). 109 to 112 (GADR) contacts substrate. Catalysis depends on aspartate 111, which acts as the Proton acceptor. Aspartate 131 is a binding site for K(+). Threonine 134 serves as a coordination point for ATP. Position 185 (threonine 185) interacts with substrate.

It belongs to the type III pantothenate kinase family. Homodimer. The cofactor is NH4(+). It depends on K(+) as a cofactor.

It is found in the cytoplasm. The catalysed reaction is (R)-pantothenate + ATP = (R)-4'-phosphopantothenate + ADP + H(+). The protein operates within cofactor biosynthesis; coenzyme A biosynthesis; CoA from (R)-pantothenate: step 1/5. Catalyzes the phosphorylation of pantothenate (Pan), the first step in CoA biosynthesis. This Nocardia farcinica (strain IFM 10152) protein is Type III pantothenate kinase.